The sequence spans 671 residues: MSSNSPTNLADRYAFLQAELARLEHAYYVLDNPLLPDIEYDRLYRELLDIEAAHPQWVTSESLSQRVGGTALKEFDSVTHAVPMLSLNNAFEDSELIAFDRRCREALHVEHVAYAGELKFDGLAISLRYENGTLVTAATRGDGASGEDVTANIKTIRAIPLKLTGKNIPEILEVRGEVFMYLKDFEKMNRQAAELGEKEFANPRNAAAGSLRQLDSKITAKRPLSFFAYGLGALEPQSWLPKTHEELLNAYVELGLPVCSERRVLHSVEEILAFYNEIGAKRDSLPYDIDGVVYKVNSFAEQAKLGFVSRAPRFALAHKYPAQEALTTVLGIDVQVGRTGAITPVARLAPVEVGGVTVTNATLHNEDEVKRKDVRIGDTVSVRRAGDVIPEVVSVIKERRPSDAKEFVMPSRCPVCDSHIERLADEAVARCSGGLFCGAQRKQALIHFAHRRALDIEGLGEKIVDQLVDQNLVRTPADLYRLGFTALANLERMGEKSADNLIQAINQSRNTTLARFIFALGIRHVGETTAKDLANHYQSMHALMDASVEELLTVKDVGPVVADSITSFMQEAHNREVIEQLLASGMQLSVEEKIISAAVFGKTFVLTGTFPTMTRDEAKDLLEKAGAKVAGSVSKKTDYVVAGTDAGSKLAKAEELGVPVIDEEEMLNLLK.

NAD(+)-binding positions include 37–41 (DIEYD), 86–87 (SL), and glutamate 117. The active-site N6-AMP-lysine intermediate is the lysine 119. NAD(+) is bound by residues arginine 140, glutamate 177, lysine 295, and lysine 319. Residues cysteine 413, cysteine 416, cysteine 431, and cysteine 437 each contribute to the Zn(2+) site. One can recognise a BRCT domain in the interval 594 to 671 (IISAAVFGKT…DEEEMLNLLK (78 aa)).

It belongs to the NAD-dependent DNA ligase family. LigA subfamily. Mg(2+) serves as cofactor. It depends on Mn(2+) as a cofactor.

It carries out the reaction NAD(+) + (deoxyribonucleotide)n-3'-hydroxyl + 5'-phospho-(deoxyribonucleotide)m = (deoxyribonucleotide)n+m + AMP + beta-nicotinamide D-nucleotide.. DNA ligase that catalyzes the formation of phosphodiester linkages between 5'-phosphoryl and 3'-hydroxyl groups in double-stranded DNA using NAD as a coenzyme and as the energy source for the reaction. It is essential for DNA replication and repair of damaged DNA. The chain is DNA ligase from Polynucleobacter asymbioticus (strain DSM 18221 / CIP 109841 / QLW-P1DMWA-1) (Polynucleobacter necessarius subsp. asymbioticus).